A 193-amino-acid chain; its full sequence is RNA pyrophosphohydrolase (193 aa).

The region spanning 6 to 149 is the Nudix hydrolase domain; sequence GFRPNVGIIL…KRDVYQRALQ (144 aa). The Nudix box motif lies at 38–59; that stretch reads GGIKFGETPEQAMFRELEEEVG. The segment at 174-193 is disordered; it reads THSARKTDEPSTEQTKPNNE.

The protein belongs to the Nudix hydrolase family. RppH subfamily. A divalent metal cation is required as a cofactor.

Its function is as follows. Accelerates the degradation of transcripts by removing pyrophosphate from the 5'-end of triphosphorylated RNA, leading to a more labile monophosphorylated state that can stimulate subsequent ribonuclease cleavage. This Herminiimonas arsenicoxydans protein is RNA pyrophosphohydrolase.